The chain runs to 98 residues: NADH-ubiquinone oxidoreductase chain 4L (98 aa).

Transmembrane regions (helical) follow at residues 1–21, 29–49, and 61–81; these read MPFIYINVLLAYFMSLLGLLI, SLLCLEGMMLSLFIMATLMTL, and IVLLVFAACEAAVGLALLVLI.

Belongs to the complex I subunit 4L family. Core subunit of respiratory chain NADH dehydrogenase (Complex I) which is composed of 45 different subunits.

The protein localises to the mitochondrion inner membrane. It catalyses the reaction a ubiquinone + NADH + 5 H(+)(in) = a ubiquinol + NAD(+) + 4 H(+)(out). Functionally, core subunit of the mitochondrial membrane respiratory chain NADH dehydrogenase (Complex I) which catalyzes electron transfer from NADH through the respiratory chain, using ubiquinone as an electron acceptor. Part of the enzyme membrane arm which is embedded in the lipid bilayer and involved in proton translocation. This chain is NADH-ubiquinone oxidoreductase chain 4L (MT-ND4L), found in Aotus trivirgatus (Three-striped night monkey).